The sequence spans 298 residues: Putative olfactory receptor 10D4 (298 aa).

Over 1 to 23 (MRNHTMVTEFILLGIPETEGLET) the chain is Extracellular. A glycan (N-linked (GlcNAc...) asparagine) is linked at Asn-3. The helical transmembrane segment at 24 to 44 (ALLFLFSSFYLCTLLGNVLIL) threads the bilayer. The Cytoplasmic portion of the chain corresponds to 45–52 (TAIISSTR). A helical transmembrane segment spans residues 53–73 (LHTPMYFFLGNLSIFDLGFSS). Over 74-97 (TTVPKMLFYLSGNSHAISYAGCVS) the chain is Extracellular. The cysteines at positions 95 and 187 are disulfide-linked. A helical membrane pass occupies residues 98-118 (QLFFYHFLGCTECFLYTVMAC). Residues 119-137 (DRFVAICFPLRYTVIMNHR) lie on the Cytoplasmic side of the membrane. A helical membrane pass occupies residues 138-158 (VCFMLATGTWMIGCVHAMILT). Residues 159–195 (PLTFQLPYCGPNKVGYYFCDIPAVLPLACKDTSLAQR) lie on the Extracellular side of the membrane. Residues 196–215 (VGFTNVGLLSLICFFLILVS) form a helical membrane-spanning segment. Topologically, residues 216–235 (YTCIGISISKIRSAEGRQRA) are cytoplasmic. The chain crosses the membrane as a helical span at residues 236 to 256 (FSTCSAHLTAILCAYGPVIVI). Over 257 to 267 (YLQPNPSALLG) the chain is Extracellular. Residues 268–288 (SIIQILNNLVTPMLNPLIYSL) form a helical membrane-spanning segment. The Cytoplasmic portion of the chain corresponds to 289–298 (RNKDVKSDQP).

Belongs to the G-protein coupled receptor 1 family.

Its subcellular location is the cell membrane. In terms of biological role, odorant receptor. The protein is Putative olfactory receptor 10D4 (OR10D4P) of Homo sapiens (Human).